A 128-amino-acid polypeptide reads, in one-letter code: Large ribosomal subunit protein mL51 (128 aa).

A mitochondrion-targeting transit peptide spans methionine 1–leucine 31.

Belongs to the mitochondrion-specific ribosomal protein mL51 family. Component of the mitochondrial ribosome large subunit (39S) which comprises a 16S rRNA and about 50 distinct proteins. Interacts with OXA1L.

It is found in the mitochondrion. This chain is Large ribosomal subunit protein mL51 (MRPL51), found in Bos taurus (Bovine).